The following is a 95-amino-acid chain: Large ribosomal subunit protein bL27 (95 aa).

A propeptide spanning residues 1-6 is cleaved from the precursor; it reads MKLQLF. Positions 1 to 25 are disordered; the sequence is MKLQLFAHKKGVGSSRNGRDSESKR.

It belongs to the bacterial ribosomal protein bL27 family. Post-translationally, the N-terminus is cleaved by ribosomal processing cysteine protease Prp.

The chain is Large ribosomal subunit protein bL27 from Thermoanaerobacter pseudethanolicus (strain ATCC 33223 / 39E) (Clostridium thermohydrosulfuricum).